The primary structure comprises 256 residues: tRNA-cytidine(32) 2-sulfurtransferase 1 (256 aa).

Positions 38-43 match the PP-loop motif motif; that stretch reads SGGKDS. Residues C113, C116, and C204 each contribute to the [4Fe-4S] cluster site.

Belongs to the TtcA family. As to quaternary structure, homodimer. The cofactor is Mg(2+). Requires [4Fe-4S] cluster as cofactor.

It is found in the cytoplasm. The catalysed reaction is cytidine(32) in tRNA + S-sulfanyl-L-cysteinyl-[cysteine desulfurase] + AH2 + ATP = 2-thiocytidine(32) in tRNA + L-cysteinyl-[cysteine desulfurase] + A + AMP + diphosphate + H(+). Its pathway is tRNA modification. Its function is as follows. Catalyzes the ATP-dependent 2-thiolation of cytidine in position 32 of tRNA, to form 2-thiocytidine (s(2)C32). The sulfur atoms are provided by the cysteine/cysteine desulfurase (IscS) system. The chain is tRNA-cytidine(32) 2-sulfurtransferase 1 from Francisella philomiragia subsp. philomiragia (strain ATCC 25017 / CCUG 19701 / FSC 153 / O#319-036).